The following is a 250-amino-acid chain: 2,5-dichloro-2,5-cyclohexadiene-1,4-diol dehydrogenase LinX (250 aa).

NAD(+) contacts are provided by Asp-38, Asp-64, Val-65, Tyr-156, Lys-160, Thr-191, and Thr-194. Catalysis depends on Tyr-156, which acts as the Proton acceptor.

Belongs to the short-chain dehydrogenases/reductases (SDR) family.

The enzyme catalyses 2,5-dichlorocyclohexa-2,5-dien-1,4-diol + NAD(+) = 2,5-dichlorohydroquinone + NADH + H(+). Its function is as follows. Catalyzes the degradation of 2,5-dichloro-2,5-cyclohexadiene-1,4-diol (2,5-DDOL) into 2,5-dichlorohydroquinone (2,5-DCHQ) in vitro. LinX appears not to be involved in gamma-hexachlorocyclohexane (gamma-HCH) degradation pathway, in contrast to LinC which has the same enzymatic activity. This Sphingobium indicum (strain DSM 16412 / CCM 7286 / MTCC 6364 / B90A) protein is 2,5-dichloro-2,5-cyclohexadiene-1,4-diol dehydrogenase LinX.